The chain runs to 191 residues: Ribosome maturation factor RimP (191 aa).

This sequence belongs to the RimP family.

The protein localises to the cytoplasm. In terms of biological role, required for maturation of 30S ribosomal subunits. This Caulobacter vibrioides (strain NA1000 / CB15N) (Caulobacter crescentus) protein is Ribosome maturation factor RimP.